The sequence spans 304 residues: Ribonuclease Z (304 aa).

Zn(2+)-binding residues include His63, His65, Asp67, His68, His141, Asp208, and His266. Catalysis depends on Asp67, which acts as the Proton acceptor.

Belongs to the RNase Z family. As to quaternary structure, homodimer. Zn(2+) is required as a cofactor.

The enzyme catalyses Endonucleolytic cleavage of RNA, removing extra 3' nucleotides from tRNA precursor, generating 3' termini of tRNAs. A 3'-hydroxy group is left at the tRNA terminus and a 5'-phosphoryl group is left at the trailer molecule.. Functionally, zinc phosphodiesterase, which displays some tRNA 3'-processing endonuclease activity. Probably involved in tRNA maturation, by removing a 3'-trailer from precursor tRNA. The protein is Ribonuclease Z of Chlamydia muridarum (strain MoPn / Nigg).